The chain runs to 181 residues: Adenine phosphoribosyltransferase 1 (181 aa).

This sequence belongs to the purine/pyrimidine phosphoribosyltransferase family. As to quaternary structure, homodimer.

Its subcellular location is the cytoplasm. The catalysed reaction is AMP + diphosphate = 5-phospho-alpha-D-ribose 1-diphosphate + adenine. The protein operates within purine metabolism; AMP biosynthesis via salvage pathway; AMP from adenine: step 1/1. In terms of biological role, catalyzes a salvage reaction resulting in the formation of AMP, that is energically less costly than de novo synthesis. The polypeptide is Adenine phosphoribosyltransferase 1 (APT1) (Triticum aestivum (Wheat)).